The chain runs to 314 residues: uncharacterized protein (314 aa).

The interval 39-146 (QENVDSDSTD…SDYSSDESNS (108 aa)) is disordered. Positions 56–76 (STKNVSRNIPKNIPKSISKNI) are enriched in polar residues. The span at 88–131 (IPKNVSKNIPKNVPKNVSKNIPKNIPKNVPNKSRNKYSNYSEDS) shows a compositional bias: low complexity. Residues 132-141 (NYSEDSDYSS) are compositionally biased toward acidic residues.

This is an uncharacterized protein from Acanthamoeba polyphaga mimivirus (APMV).